The primary structure comprises 259 residues: Thiazole synthase (259 aa).

Lys-95 functions as the Schiff-base intermediate with DXP in the catalytic mechanism. 1-deoxy-D-xylulose 5-phosphate-binding positions include Gly-156, 182-183 (AG), and 204-205 (NT).

It belongs to the ThiG family. Homotetramer. Forms heterodimers with either ThiH or ThiS.

It localises to the cytoplasm. The enzyme catalyses [ThiS sulfur-carrier protein]-C-terminal-Gly-aminoethanethioate + 2-iminoacetate + 1-deoxy-D-xylulose 5-phosphate = [ThiS sulfur-carrier protein]-C-terminal Gly-Gly + 2-[(2R,5Z)-2-carboxy-4-methylthiazol-5(2H)-ylidene]ethyl phosphate + 2 H2O + H(+). It participates in cofactor biosynthesis; thiamine diphosphate biosynthesis. Catalyzes the rearrangement of 1-deoxy-D-xylulose 5-phosphate (DXP) to produce the thiazole phosphate moiety of thiamine. Sulfur is provided by the thiocarboxylate moiety of the carrier protein ThiS. In vitro, sulfur can be provided by H(2)S. In Proteus mirabilis (strain HI4320), this protein is Thiazole synthase.